The sequence spans 199 residues: Ribosomal RNA large subunit methyltransferase E (199 aa).

Residues Gly53, Trp55, Asp73, Asp92, and Asp114 each contribute to the S-adenosyl-L-methionine site. Lys154 acts as the Proton acceptor in catalysis.

This sequence belongs to the class I-like SAM-binding methyltransferase superfamily. RNA methyltransferase RlmE family.

It is found in the cytoplasm. It carries out the reaction uridine(2552) in 23S rRNA + S-adenosyl-L-methionine = 2'-O-methyluridine(2552) in 23S rRNA + S-adenosyl-L-homocysteine + H(+). Its function is as follows. Specifically methylates the uridine in position 2552 of 23S rRNA at the 2'-O position of the ribose in the fully assembled 50S ribosomal subunit. The sequence is that of Ribosomal RNA large subunit methyltransferase E from Treponema denticola (strain ATCC 35405 / DSM 14222 / CIP 103919 / JCM 8153 / KCTC 15104).